The following is a 202-amino-acid chain: Superoxide dismutase [Fe] (202 aa).

4 residues coordinate Fe cation: histidine 30, histidine 78, aspartate 164, and histidine 168.

Belongs to the iron/manganese superoxide dismutase family. As to quaternary structure, homotetramer. It depends on Fe cation as a cofactor.

The catalysed reaction is 2 superoxide + 2 H(+) = H2O2 + O2. Destroys superoxide anion radicals which are normally produced within the cells and which are toxic to biological systems. In Methanothermobacter marburgensis (strain ATCC BAA-927 / DSM 2133 / JCM 14651 / NBRC 100331 / OCM 82 / Marburg) (Methanobacterium thermoautotrophicum), this protein is Superoxide dismutase [Fe] (sod).